Reading from the N-terminus, the 62-residue chain is uncharacterized protein (62 aa).

The next 2 helical transmembrane spans lie at 7–27 (LLLLFAFAAVFSIMLIGVFIA) and 34–51 (IIASIVLVCAVMGGGFTL).

The protein localises to the cell membrane. This is an uncharacterized protein from Bacillus subtilis (strain 168).